The sequence spans 475 residues: tRNA (guanine(37)-N(1))-methyltransferase (475 aa).

Residues H219, 258–259 (DL), and 286–287 (DG) contribute to the S-adenosyl-L-methionine site. The tract at residues 306–328 (KITKQKPTSNDKKRNRKVESPTV) is disordered. N349 is a binding site for S-adenosyl-L-methionine. Positions 456–469 (NLVSQSDVSKSSDN) are enriched in polar residues. Residues 456–475 (NLVSQSDVSKSSDNILEKDT) are disordered.

The protein belongs to the class I-like SAM-binding methyltransferase superfamily. TRM5/TYW2 family. In terms of assembly, monomer.

It localises to the mitochondrion matrix. It is found in the nucleus. The protein resides in the cytoplasm. It catalyses the reaction guanosine(37) in tRNA + S-adenosyl-L-methionine = N(1)-methylguanosine(37) in tRNA + S-adenosyl-L-homocysteine + H(+). Functionally, specifically methylates the N1 position of guanosine-37 in various cytoplasmic and mitochondrial tRNAs. Methylation is not dependent on the nature of the nucleoside 5' of the target nucleoside. This is the first step in the biosynthesis of wybutosine (yW), a modified base adjacent to the anticodon of tRNAs and required for accurate decoding. The chain is tRNA (guanine(37)-N(1))-methyltransferase from Batrachochytrium dendrobatidis (strain JAM81 / FGSC 10211) (Frog chytrid fungus).